We begin with the raw amino-acid sequence, 98 residues long: NADH-ubiquinone oxidoreductase chain 4L (98 aa).

The next 3 helical transmembrane spans lie at 2-22, 26-46, and 61-81; these read SPIYINLMMAFIFSLLGTLLF, LMSTLLCLEGMMLSLFIMVTS, and ITMLVFGACEAAIGLALLVMI.

Belongs to the complex I subunit 4L family. As to quaternary structure, core subunit of respiratory chain NADH dehydrogenase (Complex I) which is composed of 45 different subunits.

It is found in the mitochondrion inner membrane. It catalyses the reaction a ubiquinone + NADH + 5 H(+)(in) = a ubiquinol + NAD(+) + 4 H(+)(out). Core subunit of the mitochondrial membrane respiratory chain NADH dehydrogenase (Complex I) which catalyzes electron transfer from NADH through the respiratory chain, using ubiquinone as an electron acceptor. Part of the enzyme membrane arm which is embedded in the lipid bilayer and involved in proton translocation. The chain is NADH-ubiquinone oxidoreductase chain 4L (MT-ND4L) from Nephelomys albigularis (Tomes's rice rat).